We begin with the raw amino-acid sequence, 525 residues long: Zwittermicin A synthase ZmaJ (525 aa).

The protein belongs to the ATP-dependent AMP-binding enzyme family.

It carries out the reaction holo-[peptidyl-carrier protein] + L-serine + ATP = L-seryl-[peptidyl-carrier protein] + AMP + diphosphate. It participates in antibiotic biosynthesis. Functionally, involved in the biosynthesis of the linear aminopolyol antibiotic zwittermicin A (ZmA). Specifically adenylates L-serine and loads it onto the holo form of ZmaH via a thioester linkage to the phosphopanthetheine moiety. This chain is Zwittermicin A synthase ZmaJ, found in Bacillus cereus.